Here is a 446-residue protein sequence, read N- to C-terminus: Exodeoxyribonuclease 7 large subunit (446 aa).

Belongs to the XseA family. In terms of assembly, heterooligomer composed of large and small subunits.

The protein resides in the cytoplasm. The enzyme catalyses Exonucleolytic cleavage in either 5'- to 3'- or 3'- to 5'-direction to yield nucleoside 5'-phosphates.. Bidirectionally degrades single-stranded DNA into large acid-insoluble oligonucleotides, which are then degraded further into small acid-soluble oligonucleotides. The protein is Exodeoxyribonuclease 7 large subunit of Streptococcus pneumoniae serotype 19F (strain G54).